Reading from the N-terminus, the 1017-residue chain is MGNLTMSRRTFVKTAAITGAAAAAFGASTHTALAEETYSSVSGNDTVAVKTCCRGCGKMECGVKVIVQNGRAIRVEGDEGAFQSMGNCCTKSQSSIQAAYHPDRLHYPMKRTNPKGEEPGWQRISWDEAMQSIVDNFMDIKAKHGGEAIACQVGTSRIWCMHSESILKNMLETPNNVEAWQICKGPRHFATTMVSQFAMSWMETITRPKVYVQWGGASELSNYDDSCRTTVDVASRADVHISVDPRMANMGKEADYWQHLRPGTDGALALAWTNVIIEKKLYDELYVKKWTNAPFLVCEDMEPSGFPTVRTDGSYWDVKTALLKESDIKEGGSPYKFLVYDNNWEKLKAEGVEHEYGAFTWFNADQEGVIDETGGFWEGENYDSEKARQGREAAQDNLLPGQTQGWLPDPMPFDPAIDPALEGEFEITLKDGKTVKVKPVWEHYKARAAEYKPEVAAEITGIPASEIEAAATAYGTRIDPSTGYGNGGIQYMLAVEHFCSAIQNCSAFDNLVGITGNMDTPGGNRGPTIVPIDGDLQGFSAWAPGATTPPEEVNRKQIGIDKFPLLGWWQYWCDSHSLWDAVITGDPYPVRALWNESGNFMSQTNTTRAWEALCSLDFYVDLNLWHTPQNDTADIILPVAHWIELNSPRASQGSAGAMGATVKCVQPPAEAKYDPEIVMDLARRMNWKWTDEPGNEWPDINWQLDDSIKLLTDDELTYTTWHVENGKPTFERHGVPMAEVTPKYKTWDEYVKAFQEHGWWQAKDIEPRNWGTYRRYQTGAMRARDRVWGRLDYTAGKGIGDWKPGWFTPTMKQEIWSTVMESHHPDHPEWRLPTYTEPPHGPKDGDRIKEYPLTATTGRRIPVYFHSEHRQLPWCRELWPVPRVEINPKTAAEYGIEQGDWVWIETEWGKIREVADLYYGVKEDVINLEHTWWYPEVKDAGHGWQFSQVNQLIDHYAQDPHSGTSNLRAYQVKIYKATPENSPFNNPVPCDSTGTPIIHTSDDPRLKEWLPTYEGRE.

Positions 1 to 34 form a signal peptide, tat-type signal; it reads MGNLTMSRRTFVKTAAITGAAAAAFGASTHTALA. The 4Fe-4S Mo/W bis-MGD-type domain occupies 45-103; sequence DTVAVKTCCRGCGKMECGVKVIVQNGRAIRVEGDEGAFQSMGNCCTKSQSSIQAAYHPD. 4 residues coordinate [4Fe-4S] cluster: Cys53, Cys56, Cys61, and Cys89. Residue Lys91 is the Electron donor/acceptor of the active site.

It belongs to the prokaryotic molybdopterin-containing oxidoreductase family. [4Fe-4S] cluster is required as a cofactor. It depends on Mo-bis(molybdopterin guanine dinucleotide) as a cofactor. Post-translationally, predicted to be exported by the Tat system. The position of the signal peptide cleavage has not been experimentally proven.

This is an uncharacterized protein from Eggerthella lenta (strain ATCC 25559 / DSM 2243 / CCUG 17323 / JCM 9979 / KCTC 3265 / NCTC 11813 / VPI 0255 / 1899 B) (Eubacterium lentum).